A 259-amino-acid polypeptide reads, in one-letter code: Protein FAM220A (259 aa).

The segment at 29–66 (GLKRRSEKRNPSPSDVPSWTDQPVADTHGKSRAMAAAS) is disordered. Residues 39 to 49 (PSPSDVPSWTD) show a composition bias toward polar residues.

As to quaternary structure, interacts with transcriptional activator STAT3; the interaction occurs in both the nucleus and the cytoplasm, is enhanced by IL6 and promotes STAT3 dephosphorylation, leading to negative regulation of STAT3 transcriptional activator activity. Can interact with both unphosphorylated and phosphorylated STAT3 but interacts preferentially with phosphorylated STAT3 in the nucleus. Interacts with protein phosphatase PTPN2/TC45; this promotes interaction of PTPN2 with STAT3, leading to dephosphorylation of STAT3 by PTPN2.

It localises to the nucleus. The protein resides in the cytoplasm. It is found in the cytoplasmic vesicle. Its subcellular location is the secretory vesicle. The protein localises to the acrosome. In terms of biological role, promotes dephosphorylation of transcriptional activator STAT3 by interacting with both STAT3 and protein phosphatase PTPN2. This promotes interaction of PTPN2 with STAT3 and mediates STAT3 dephosphorylation by PTPN2, leading to negative regulation of STAT3 transcriptional activator activity. May be required for spermiogenesis or sperm function. This Rattus norvegicus (Rat) protein is Protein FAM220A (Fam220a).